The primary structure comprises 160 residues: S-protein homolog 13 (160 aa).

The signal sequence occupies residues 1–27 (MGRDLGWCFFVATVLLAAVLLPAPTIA).

This sequence belongs to the plant self-incompatibility (S1) protein family.

The protein resides in the secreted. The chain is S-protein homolog 13 from Arabidopsis thaliana (Mouse-ear cress).